The following is a 185-amino-acid chain: Ribosome-recycling factor (185 aa).

It belongs to the RRF family.

The protein localises to the cytoplasm. In terms of biological role, responsible for the release of ribosomes from messenger RNA at the termination of protein biosynthesis. May increase the efficiency of translation by recycling ribosomes from one round of translation to another. The polypeptide is Ribosome-recycling factor (Geobacillus kaustophilus (strain HTA426)).